Consider the following 87-residue polypeptide: Cytochrome c6 (87 aa).

The heme c site is built by cysteine 14, cysteine 17, histidine 18, and methionine 58.

This sequence belongs to the cytochrome c family. PetJ subfamily. Monomer. In terms of processing, binds 1 heme c group covalently per subunit.

The protein resides in the cellular thylakoid lumen. Functionally, functions as an electron carrier between membrane-bound cytochrome b6-f and photosystem I in oxygenic photosynthesis. This is Cytochrome c6 (petJ) from Aphanizomenon flos-aquae.